A 348-amino-acid chain; its full sequence is UDP-3-O-acylglucosamine N-acyltransferase (348 aa).

The Proton acceptor role is filled by histidine 241.

This sequence belongs to the transferase hexapeptide repeat family. LpxD subfamily. As to quaternary structure, homotrimer.

The catalysed reaction is a UDP-3-O-[(3R)-3-hydroxyacyl]-alpha-D-glucosamine + a (3R)-hydroxyacyl-[ACP] = a UDP-2-N,3-O-bis[(3R)-3-hydroxyacyl]-alpha-D-glucosamine + holo-[ACP] + H(+). It functions in the pathway bacterial outer membrane biogenesis; LPS lipid A biosynthesis. Catalyzes the N-acylation of UDP-3-O-acylglucosamine using 3-hydroxyacyl-ACP as the acyl donor. Is involved in the biosynthesis of lipid A, a phosphorylated glycolipid that anchors the lipopolysaccharide to the outer membrane of the cell. The sequence is that of UDP-3-O-acylglucosamine N-acyltransferase from Neisseria meningitidis serogroup C (strain 053442).